We begin with the raw amino-acid sequence, 160 residues long: Transcription elongation factor GreA (160 aa).

Positions 12-76 (EGVKKLEEEL…QLENMLKNAS (65 aa)) form a coiled coil.

The protein belongs to the GreA/GreB family.

Its function is as follows. Necessary for efficient RNA polymerase transcription elongation past template-encoded arresting sites. The arresting sites in DNA have the property of trapping a certain fraction of elongating RNA polymerases that pass through, resulting in locked ternary complexes. Cleavage of the nascent transcript by cleavage factors such as GreA or GreB allows the resumption of elongation from the new 3'terminus. GreA releases sequences of 2 to 3 nucleotides. The chain is Transcription elongation factor GreA from Clostridium botulinum (strain Hall / ATCC 3502 / NCTC 13319 / Type A).